We begin with the raw amino-acid sequence, 369 residues long: Anthranilate phosphoribosyltransferase (369 aa).

5-phospho-alpha-D-ribose 1-diphosphate contacts are provided by residues glycine 99, 102-103 (GD), 109-112 (NVST), 127-135 (KHGNRGVSS), and serine 139. Glycine 99 is a binding site for anthranilate. Mg(2+) is bound at residue serine 111. Asparagine 130 is a binding site for anthranilate. Residue arginine 185 participates in anthranilate binding. Aspartate 244 and glutamate 245 together coordinate Mg(2+).

This sequence belongs to the anthranilate phosphoribosyltransferase family. In terms of assembly, homodimer. Requires Mg(2+) as cofactor.

The enzyme catalyses N-(5-phospho-beta-D-ribosyl)anthranilate + diphosphate = 5-phospho-alpha-D-ribose 1-diphosphate + anthranilate. It participates in amino-acid biosynthesis; L-tryptophan biosynthesis; L-tryptophan from chorismate: step 2/5. Functionally, catalyzes the transfer of the phosphoribosyl group of 5-phosphorylribose-1-pyrophosphate (PRPP) to anthranilate to yield N-(5'-phosphoribosyl)-anthranilate (PRA). In Psychrobacter sp. (strain PRwf-1), this protein is Anthranilate phosphoribosyltransferase.